Reading from the N-terminus, the 279-residue chain is Protein NipSnap homolog 1 (279 aa).

Belongs to the NipSnap family.

It localises to the mitochondrion matrix. In terms of biological role, protein involved in mitophagy. Accumulates on the mitochondria surface in response to mitochondrial depolarization and acts as a 'eat me' signal by recruiting proteins involved in selective autophagy. The polypeptide is Protein NipSnap homolog 1 (Danio rerio (Zebrafish)).